We begin with the raw amino-acid sequence, 330 residues long: (11Z)-hexadec-11-enoyl-CoA conjugase (330 aa).

2 helical membrane passes run 37 to 57 (IVVM…YGLY) and 65 to 85 (LATS…ITAG). The short motif at 87–92 (HRLWSH) is the Histidine box-1 element. A helical transmembrane segment spans residues 101-121 (LEILLMVFNSIAFQNTIFTWV). The Histidine box-2 signature appears at 124–128 (HRLHH). 2 consecutive transmembrane segments (helical) span residues 185 to 205 (AIPF…MYFW) and 216 to 238 (TVLR…HLWG). The short motif at 264–268 (HNYHH) is the Histidine box-3 element.

This sequence belongs to the fatty acid desaturase type 1 family. The cofactor is Fe(2+). Highly expressed in the pheromone gland.

It localises to the membrane. The enzyme catalyses an 11,12-saturated fatty acyl-CoA + 2 Fe(II)-[cytochrome b5] + O2 + 2 H(+) = an (11Z)-Delta(11)-fatty acyl-CoA + 2 Fe(III)-[cytochrome b5] + 2 H2O. The catalysed reaction is (11Z)-hexadecenoyl-CoA + AH2 + O2 = (10E,12Z)-hexadecadienoyl-CoA + A + 2 H2O. Fatty acid desaturase that catalyzes 2 consecutive steps in the biosynthesis of bombykol, a sex pheromone produced by the moth. First acts as an acyl-CoA Delta(11) desaturase (1) by catalyzing the formation of Delta(11) fatty acyl precursors. Then acts as a (11Z)-hexadec-11-enoyl-CoA conjugase (2) by converting a single cis double bond at position 11 of (11Z)-hexadec-11-enoyl-CoA into conjugated 10 trans and 12 cis double bonds. This is (11Z)-hexadec-11-enoyl-CoA conjugase from Bombyx mori (Silk moth).